A 315-amino-acid chain; its full sequence is N-acetylneuraminate lyase (315 aa).

Positions 59 and 60 each coordinate aceneuramate. Residue Tyr149 is the Proton donor of the active site. Catalysis depends on Lys177, which acts as the Schiff-base intermediate with substrate. Aceneuramate is bound by residues Ser179, Gly202, Asp204, Glu205, and Gly221.

Belongs to the DapA family. NanA subfamily. As to quaternary structure, homotetramer.

The protein resides in the cytoplasm. It carries out the reaction aceneuramate = aldehydo-N-acetyl-D-mannosamine + pyruvate. It participates in amino-sugar metabolism; N-acetylneuraminate degradation; D-fructose 6-phosphate from N-acetylneuraminate: step 1/5. Catalyzes the reversible aldol cleavage of N-acetylneuraminic acid (sialic acid; Neu5Ac) to form pyruvate and N-acetylmannosamine (ManNAc) via a Schiff base intermediate. Cannot use 2,7-anhydro-Neu5Ac. Involved in the degradation of sialic acid, which is present in the host mucus layer and represents a much-coveted source of nutrients for R.gnavus, a prevalent member of the normal gut microbiota. This is N-acetylneuraminate lyase from Mediterraneibacter gnavus (strain ATCC 29149 / DSM 114966 / JCM 6515 / VPI C7-9) (Ruminococcus gnavus).